A 470-amino-acid chain; its full sequence is Membrane-bound lytic murein transglycosylase F (470 aa).

An N-terminal signal peptide occupies residues 1–24 (MPSLKTKGAAGKFASLLLVLALSA). Positions 25–262 (CSRPAPPPET…RALERYFGHV (238 aa)) are non-LT domain. The interval 263-470 (KRLGSSDILG…RGEDGLPPPG (208 aa)) is LT domain. E309 is an active-site residue.

This sequence in the N-terminal section; belongs to the bacterial solute-binding protein 3 family. In the C-terminal section; belongs to the transglycosylase Slt family.

Its subcellular location is the cell outer membrane. It catalyses the reaction Exolytic cleavage of the (1-&gt;4)-beta-glycosidic linkage between N-acetylmuramic acid (MurNAc) and N-acetylglucosamine (GlcNAc) residues in peptidoglycan, from either the reducing or the non-reducing ends of the peptidoglycan chains, with concomitant formation of a 1,6-anhydrobond in the MurNAc residue.. Functionally, murein-degrading enzyme that degrades murein glycan strands and insoluble, high-molecular weight murein sacculi, with the concomitant formation of a 1,6-anhydromuramoyl product. Lytic transglycosylases (LTs) play an integral role in the metabolism of the peptidoglycan (PG) sacculus. Their lytic action creates space within the PG sacculus to allow for its expansion as well as for the insertion of various structures such as secretion systems and flagella. This Thiobacillus denitrificans (strain ATCC 25259 / T1) protein is Membrane-bound lytic murein transglycosylase F.